The primary structure comprises 40 residues: Photosystem II reaction center protein J (40 aa).

Residues 8-28 traverse the membrane as a helical segment; the sequence is IPLWIIGTVAGILVIGLIGIF.

It belongs to the PsbJ family. As to quaternary structure, PSII is composed of 1 copy each of membrane proteins PsbA, PsbB, PsbC, PsbD, PsbE, PsbF, PsbH, PsbI, PsbJ, PsbK, PsbL, PsbM, PsbT, PsbX, PsbY, PsbZ, Psb30/Ycf12, at least 3 peripheral proteins of the oxygen-evolving complex and a large number of cofactors. It forms dimeric complexes.

The protein localises to the plastid. Its subcellular location is the chloroplast thylakoid membrane. One of the components of the core complex of photosystem II (PSII). PSII is a light-driven water:plastoquinone oxidoreductase that uses light energy to abstract electrons from H(2)O, generating O(2) and a proton gradient subsequently used for ATP formation. It consists of a core antenna complex that captures photons, and an electron transfer chain that converts photonic excitation into a charge separation. The sequence is that of Photosystem II reaction center protein J from Nicotiana sylvestris (Wood tobacco).